Reading from the N-terminus, the 516-residue chain is Glucose-1-phosphate adenylyltransferase large subunit 1, chloroplastic/amyloplastic (516 aa).

The transit peptide at M1–C45 directs the protein to the chloroplast.

This sequence belongs to the bacterial/plant glucose-1-phosphate adenylyltransferase family. In terms of assembly, heterotetramer. Endosperm.

The protein resides in the plastid. Its subcellular location is the chloroplast. It is found in the amyloplast. It catalyses the reaction alpha-D-glucose 1-phosphate + ATP + H(+) = ADP-alpha-D-glucose + diphosphate. The protein operates within glycan biosynthesis; starch biosynthesis. Its activity is regulated as follows. Activated by 3'phosphoglycerate, inhibited by orthophosphate. Allosteric regulation. Its function is as follows. This protein plays a role in synthesis of starch. It catalyzes the synthesis of the activated glycosyl donor, ADP-glucose from Glc-1-P and ATP. The polypeptide is Glucose-1-phosphate adenylyltransferase large subunit 1, chloroplastic/amyloplastic (SH2) (Zea mays (Maize)).